Reading from the N-terminus, the 198-residue chain is NAD(P)H dehydrogenase (quinone) (198 aa).

Residues 4–189 (ILVLYYSMYG…SIARYQGEYV (186 aa)) enclose the Flavodoxin-like domain. FMN contacts are provided by residues 10 to 15 (SMYGHI) and 78 to 80 (TRF). Tyr-12 contacts NAD(+). Position 98 (Trp-98) interacts with substrate. Residues 113 to 118 (STGTGG) and His-133 each bind FMN.

This sequence belongs to the WrbA family. Requires FMN as cofactor.

It catalyses the reaction a quinone + NADH + H(+) = a quinol + NAD(+). It carries out the reaction a quinone + NADPH + H(+) = a quinol + NADP(+). This is NAD(P)H dehydrogenase (quinone) from Citrobacter koseri (strain ATCC BAA-895 / CDC 4225-83 / SGSC4696).